Reading from the N-terminus, the 487-residue chain is N-succinylglutamate 5-semialdehyde dehydrogenase (487 aa).

NAD(+) is bound at residue 221–226 (GSSDTG). Active-site residues include Glu-244 and Cys-278.

Belongs to the aldehyde dehydrogenase family. AstD subfamily.

It carries out the reaction N-succinyl-L-glutamate 5-semialdehyde + NAD(+) + H2O = N-succinyl-L-glutamate + NADH + 2 H(+). Its pathway is amino-acid degradation; L-arginine degradation via AST pathway; L-glutamate and succinate from L-arginine: step 4/5. In terms of biological role, catalyzes the NAD-dependent reduction of succinylglutamate semialdehyde into succinylglutamate. The polypeptide is N-succinylglutamate 5-semialdehyde dehydrogenase (Burkholderia pseudomallei (strain 1106a)).